A 184-amino-acid chain; its full sequence is MREYKLVVLGSGGVGKSALTVQFVQGIFVEKYDPTIEDSYRKQVEVDCQQCMLEILDTAGTEQFTAMRDLYMKNGQGFALVYSITAQSTFNDLQDLREQILRVKDTEDVPMILVGNKCDLEDERVVGKEQGQNLARQWCNCAFLESSAKSKINVNEIFYDLVRQINRKTPVEKKKPKKKSCLLL.

Residues 10–18 (GSGGVGKSA), 29–35 (VEKYDPT), G60, and 116–119 (NKCD) each bind GTP. The Effector region motif lies at 32 to 40 (YDPTIEDSY). Residue C181 is modified to Cysteine methyl ester. C181 is lipidated: S-geranylgeranyl cysteine. Residues 182–184 (LLL) constitute a propeptide, removed in mature form.

The protein belongs to the small GTPase superfamily. Ras family. In terms of assembly, found in a complex, at least composed of ITGB1BP1, KRIT1 and RAP1A. Interacts (active GTP-bound form preferentially) with KRIT1 (via C-terminus FERM domain); the interaction does not induce the opening conformation of KRIT1. Found in a complex composed of CDH1, RAP1A and PKP3; PKP3 acts as a scaffold protein within the complex, the complex is required for CDH1 localization to mature desmosome cell junctions. In its GTP-bound form interacts with PLCE1 and RADIL. Interacts with SGSM1, SGSM2 and SGSM3. Interacts (via GTP-bound active form) with RAPGEF2 (via Ras-associating domain). Interacts with TBC1D21. Interacts with RAP1GDS1.

The protein resides in the cell membrane. The protein localises to the cytoplasm. Its subcellular location is the perinuclear region. It localises to the cell junction. It is found in the early endosome. The enzyme catalyses GTP + H2O = GDP + phosphate + H(+). Activated by guanine nucleotide-exchange factors (GEF) EPAC and EPAC2 in a cAMP-dependent manner, and GFR. Counteracts the mitogenic function of Ras, at least partly because it can interact with Ras GAPs and RAF in a competitive manner. Together with ITGB1BP1, regulates KRIT1 localization to microtubules and membranes. Plays a role in nerve growth factor (NGF)-induced neurite outgrowth. Plays a role in the regulation of embryonic blood vessel formation. Involved in the establishment of basal endothelial barrier function. Facilitates the progressive accumulation of CDH1 at mature desmosome junctions via cAMP-dependent signaling and its interaction with PKP3. May be involved in the regulation of the vascular endothelial growth factor receptor KDR expression at endothelial cell-cell junctions. The protein is Ras-related protein Rap-1A (RAP1A) of Bos taurus (Bovine).